A 301-amino-acid chain; its full sequence is Glycine--tRNA ligase alpha subunit (301 aa).

Belongs to the class-II aminoacyl-tRNA synthetase family. Tetramer of two alpha and two beta subunits.

It localises to the cytoplasm. It carries out the reaction tRNA(Gly) + glycine + ATP = glycyl-tRNA(Gly) + AMP + diphosphate. The chain is Glycine--tRNA ligase alpha subunit from Alteromonas mediterranea (strain DSM 17117 / CIP 110805 / LMG 28347 / Deep ecotype).